The chain runs to 620 residues: MALLQISEPGMSAAPHRHRLAAGIDLGTTNSLVATVRSGSAACLPDAEGRVTLPSVVRYLENGGIEVGKTALSAQKTDPLNTVSSAKRLIGRTLADLHQNTHYLPYRFGDNQRVIELHTRQGVKTPVEVSAEILKTLKSRAEETLGGDLVGVVITVPAYFDDAQRQATKDAARLAGLNVLRLLNEPTAAAIAYGLDNASEGTFVVYDLGGGTFDVSVLQLTKGLFEVKATGGNSALGGDDFDHRLFCRLLEQNGLSQLNEQDSQLLLSLVRAAKEQLTTQTEARIQATLSDGMPIDTSISRAEFHNLTQHLVMKTLEPVTQALKDAGVGKNEVKGVIMVGGSTRMLHVQQAVATFFGQTPLNNLNPDEVVALGAAIQANVLAGNKTDGEWLLLDVTPLSLGLETYGGLAEKIIPRNSTIPTARAQDFTTFKDGQTAMTIHVVQGERELVSDCRSLAKFTLRGIPPMAAGAARIRVTFQIDADGLLSVSAQEQSTGVQAQIEVKPSYGLDDGAITRMLKDSMDNAAEDMAARARAEAVVEAESLTDAVNAALELDSDLLDAKELQQIRQGIADLQGRLKDGKAEDIRSAVAKLSRSTDNFAAKRMNRNIQRALTGQSVDNI.

The protein belongs to the heat shock protein 70 family.

Its function is as follows. Chaperone involved in the maturation of iron-sulfur cluster-containing proteins. Has a low intrinsic ATPase activity which is markedly stimulated by HscB. The chain is Chaperone protein HscA homolog from Neisseria meningitidis serogroup A / serotype 4A (strain DSM 15465 / Z2491).